A 90-amino-acid polypeptide reads, in one-letter code: Nodulation protein NolS (90 aa).

Functionally, involved in nodulation of a particular host, M.lupulina. This Sinorhizobium meliloti (strain Sm2011 / Rm2011 / 2011) protein is Nodulation protein NolS (nolS).